A 434-amino-acid polypeptide reads, in one-letter code: Enolase (434 aa).

(2R)-2-phosphoglycerate is bound at residue Gln163. The active-site Proton donor is the Glu205. Mg(2+) contacts are provided by Asp242, Glu291, and Asp318. (2R)-2-phosphoglycerate contacts are provided by Lys343, Arg372, Ser373, and Lys394. Lys343 (proton acceptor) is an active-site residue.

This sequence belongs to the enolase family. Mg(2+) is required as a cofactor.

It is found in the cytoplasm. The protein localises to the secreted. The protein resides in the cell surface. The catalysed reaction is (2R)-2-phosphoglycerate = phosphoenolpyruvate + H2O. Its pathway is carbohydrate degradation; glycolysis; pyruvate from D-glyceraldehyde 3-phosphate: step 4/5. In terms of biological role, catalyzes the reversible conversion of 2-phosphoglycerate (2-PG) into phosphoenolpyruvate (PEP). It is essential for the degradation of carbohydrates via glycolysis. This chain is Enolase, found in Streptococcus intermedius.